The sequence spans 183 residues: Nodulation protein L (183 aa).

Belongs to the transferase hexapeptide repeat family.

Its function is as follows. Acetyltransferase implicated in the O-acetylation of Nod factors. The polypeptide is Nodulation protein L (nodL) (Rhizobium meliloti (strain 1021) (Ensifer meliloti)).